The following is a 498-amino-acid chain: Putative phosphotransferase 057R (498 aa).

In Dryophytes versicolor (chameleon treefrog), this protein is Putative phosphotransferase 057R.